We begin with the raw amino-acid sequence, 494 residues long: Probable cytosol aminopeptidase (494 aa).

Residues Lys-260 and Asp-265 each coordinate Mn(2+). Lys-272 is a catalytic residue. 3 residues coordinate Mn(2+): Asp-283, Asp-342, and Glu-344. Residue Arg-346 is part of the active site.

It belongs to the peptidase M17 family. Requires Mn(2+) as cofactor.

It localises to the cytoplasm. The enzyme catalyses Release of an N-terminal amino acid, Xaa-|-Yaa-, in which Xaa is preferably Leu, but may be other amino acids including Pro although not Arg or Lys, and Yaa may be Pro. Amino acid amides and methyl esters are also readily hydrolyzed, but rates on arylamides are exceedingly low.. It catalyses the reaction Release of an N-terminal amino acid, preferentially leucine, but not glutamic or aspartic acids.. Presumably involved in the processing and regular turnover of intracellular proteins. Catalyzes the removal of unsubstituted N-terminal amino acids from various peptides. This Bacillus cereus (strain B4264) protein is Probable cytosol aminopeptidase.